The chain runs to 85 residues: Ice-structuring protein 4 (85 aa).

A signal peptide spans 1-21; it reads MRITEANPDPDAKAVPAAAAP.

Belongs to the type-I AFP family.

The protein localises to the secreted. In terms of biological role, contributes to protect fish blood from freezing at subzero sea water temperatures. Lowers the blood freezing point. Binds to nascent ice crystals and prevents further growth. This Pseudopleuronectes americanus (Winter flounder) protein is Ice-structuring protein 4.